The sequence spans 465 residues: Ribulose bisphosphate carboxylase large chain (465 aa).

At Lys4 the chain carries N6,N6,N6-trimethyllysine. Substrate is bound by residues Asn113 and Thr163. Lys165 serves as the catalytic Proton acceptor. Residue Lys167 participates in substrate binding. 3 residues coordinate Mg(2+): Lys191, Asp193, and Glu194. Lys191 is modified (N6-carboxylysine). The active-site Proton acceptor is the His284. Substrate-binding residues include Arg285, His317, and Ser369.

The protein belongs to the RuBisCO large chain family. Type I subfamily. As to quaternary structure, heterohexadecamer of 8 large chains and 8 small chains; disulfide-linked. The disulfide link is formed within the large subunit homodimers. Requires Mg(2+) as cofactor. In terms of processing, the disulfide bond which can form in the large chain dimeric partners within the hexadecamer appears to be associated with oxidative stress and protein turnover.

Its subcellular location is the plastid. The protein localises to the chloroplast. The catalysed reaction is 2 (2R)-3-phosphoglycerate + 2 H(+) = D-ribulose 1,5-bisphosphate + CO2 + H2O. It carries out the reaction D-ribulose 1,5-bisphosphate + O2 = 2-phosphoglycolate + (2R)-3-phosphoglycerate + 2 H(+). Functionally, ruBisCO catalyzes two reactions: the carboxylation of D-ribulose 1,5-bisphosphate, the primary event in carbon dioxide fixation, as well as the oxidative fragmentation of the pentose substrate in the photorespiration process. Both reactions occur simultaneously and in competition at the same active site. The chain is Ribulose bisphosphate carboxylase large chain from Senega cruciata (Cross-leaved milkwort).